The chain runs to 148 residues: Sporulation inhibitor of replication protein SirA (148 aa).

It belongs to the SirA family. As to quaternary structure, interacts with DnaA. Forms a 1:1 complex with domain I of DnaA.

It localises to the cytoplasm. In terms of biological role, inhibits DNA replication initiation during sporulation, preventing overinitiation and thus enforcing diploidy; probably the main regulator of sporulation replication initiation under Spo0A control. During sporulation SirA prevents DnaA association with the replication origin to prevent excessive chromosome replication. Alternatively SirA binds to domain I of DnaA and prevent its interaction with DnaD, preventing DNA replication initiation. Upon ectopic expression during vegetative growth reduces chromosome copy number, leading to elongated cells with that can have a single nucleoid or be anucleate. Ectopic expression during vegetative growth blocks DnaA at oriC while blocking recruitment of DnaD to oriC. Plays a significant role during the onset of sporulation. This Bacillus subtilis (strain 168) protein is Sporulation inhibitor of replication protein SirA.